The chain runs to 147 residues: Hemoglobin subunit epsilon (147 aa).

The Globin domain maps to 3–147; sequence HWSAEEKQLI…VAHALARKYH (145 aa). Residues histidine 64 and histidine 93 each contribute to the heme b site.

Belongs to the globin family. Heterotetramer of two epsilon chains and two alpha chains. Hemoglobin E (Hbe) contains a alpha-A chains while hemoglobin M (Hbm) contains alpha-D chains.

Beta-type chain found in early embryos. The protein is Hemoglobin subunit epsilon (HBE) of Gallus gallus (Chicken).